Here is a 545-residue protein sequence, read N- to C-terminus: Capsular polysaccharide phosphotransferase SacB (545 aa).

This sequence belongs to the stealth family.

In terms of biological role, part of a capsular biosynthesis operon and has been suggested to be the polymerase that links individual UDP-N-acetyl-D-mannosamine monomers. In serotype A the capsule is composed of repeated units of (alpha 1-6)-linked N-acetyl-D-mannosamine-1-phosphate. Non-polar disruption of this open reading frame prevented capsule synthesis. This Neisseria meningitidis serogroup A protein is Capsular polysaccharide phosphotransferase SacB (sacB).